A 394-amino-acid polypeptide reads, in one-letter code: Elongation factor Tu (394 aa).

The region spanning 10–204 (KPHVNIGTIG…AVDSWIPLPE (195 aa)) is the tr-type G domain. Positions 19–26 (GHVDHGKT) are G1. 19–26 (GHVDHGKT) contacts GTP. Residue Thr-26 coordinates Mg(2+). The G2 stretch occupies residues 60–64 (GITIN). Residues 81-84 (DCPG) are G3. GTP is bound by residues 81–85 (DCPGH) and 136–139 (NKCD). Positions 136-139 (NKCD) are G4. Residues 174 to 176 (SGL) form a G5 region.

Belongs to the TRAFAC class translation factor GTPase superfamily. Classic translation factor GTPase family. EF-Tu/EF-1A subfamily. Monomer.

The protein localises to the cytoplasm. It carries out the reaction GTP + H2O = GDP + phosphate + H(+). GTP hydrolase that promotes the GTP-dependent binding of aminoacyl-tRNA to the A-site of ribosomes during protein biosynthesis. This is Elongation factor Tu from Ureaplasma parvum serovar 3 (strain ATCC 27815 / 27 / NCTC 11736).